Here is a 171-residue protein sequence, read N- to C-terminus: Vimentin-type intermediate filament-associated coiled-coil protein (171 aa).

A coiled-coil region spans residues 7-98 (LQIREANAHL…QRDQMIQELQ (92 aa)). The segment at 126-171 (ELGPLPSSHSHGAQLLPDGPGPPLGNSMREEEGQDDQQPAVFGTTV) is disordered.

Expressed in brain, heart, kidney, liver, lung, skeletal muscle, spleen and testis. Within the kidney expression is pronounced within glomeruli.

It is found in the cytoplasm. The chain is Vimentin-type intermediate filament-associated coiled-coil protein (Vmac) from Rattus norvegicus (Rat).